A 334-amino-acid chain; its full sequence is O-methyltransferase SfmM3 (334 aa).

S-adenosyl-L-methionine is bound by residues Asp190 and 216-218; that span reads GDF. His236 acts as the Proton acceptor in catalysis.

It belongs to the class I-like SAM-binding methyltransferase superfamily. Cation-independent O-methyltransferase family. COMT subfamily.

The catalysed reaction is 5-hydroxy-3-methyl-L-tyrosine + S-adenosyl-L-methionine = 5-hydroxy-3-methyl-O-methyl-L-tyrosine + S-adenosyl-L-homocysteine + H(+). It functions in the pathway antibiotic biosynthesis. O-methyltransferase that mediates the methylation of 3-hydroxy-5-methyl-L-tyrosine (3-OH-5-Me-Tyr) into 3-hydroxy-5-methyl-O-methyltyrosine (3-OH-5-Me-OMe-Tyr), a core structure of saframycin A, a potent antitumor antibiotic that belongs to the tetrahydroisoquinoline family. In Streptomyces lavendulae, this protein is O-methyltransferase SfmM3.